Reading from the N-terminus, the 221-residue chain is Glutathione S-transferase class-mu 26 kDa isozyme 1 (221 aa).

The GST N-terminal domain occupies 2–82 (PAKLGYWKIR…YIADKHGMIG (81 aa)). Glutathione is bound by residues 7–8 (YW), 40–44 (WFSKK), 53–54 (NL), and 66–67 (QS). A GST C-terminal domain is found at 84-202 (TPEERARVSM…ESNRFIKWPL (119 aa)). Residue Tyr110 participates in substrate binding.

Belongs to the GST superfamily. Mu family. In terms of assembly, homodimer.

The catalysed reaction is RX + glutathione = an S-substituted glutathione + a halide anion + H(+). Functionally, conjugation of reduced glutathione to a wide number of exogenous and endogenous hydrophobic electrophiles. GST isoenzymes appear to play a central role in the parasite detoxification system. Other functions are also suspected including a role in increasing the solubility of haematin in the parasite gut. The chain is Glutathione S-transferase class-mu 26 kDa isozyme 1 from Fasciola hepatica (Liver fluke).